A 245-amino-acid chain; its full sequence is 14-3-3 protein theta (245 aa).

N-acetylmethionine is present on Met-1. Residue Lys-3 is modified to N6-acetyllysine. Lys-49 is modified (N6-acetyllysine; alternate). Lys-49 participates in a covalent cross-link: Glycyl lysine isopeptide (Lys-Gly) (interchain with G-Cter in SUMO2); alternate. Lys-68 is subject to N6-acetyllysine. Position 82 is a 3'-nitrotyrosine (Tyr-82). Ser-92 is modified (phosphoserine). A 3'-nitrotyrosine modification is found at Tyr-104. Lys-115 is subject to N6-acetyllysine. Position 232 is a phosphoserine; by CK1 (Ser-232).

This sequence belongs to the 14-3-3 family. Homodimer. Interacts with CDK16. Interacts with RGS7 (phosphorylated form). Interacts with SSH1. Interacts with CDKN1B ('Thr-198' phosphorylated form); the interaction translocates CDKN1B to the cytoplasm. Interacts with GAB2. Interacts with the 'Ser-241' phosphorylated form of PDPK1. Interacts with the 'Thr-369' phosphorylated form of DAPK2. Interacts with PI4KB, TBC1D22A and TBC1D22B. Interacts with SLITRK1. Interacts with RIPOR2. Interacts with INAVA; the interaction increases upon PRR (pattern recognition receptor) stimulation and is required for cellular signaling pathway activation and cytokine secretion. Interacts with MARK2, MARK3 and MARK4. Interacts with MEFV.

The protein localises to the cytoplasm. In terms of biological role, adapter protein implicated in the regulation of a large spectrum of both general and specialized signaling pathways. Binds to a large number of partners, usually by recognition of a phosphoserine or phosphothreonine motif. Binding generally results in the modulation of the activity of the binding partner. Negatively regulates the kinase activity of PDPK1. The sequence is that of 14-3-3 protein theta (YWHAQ) from Bos taurus (Bovine).